Reading from the N-terminus, the 220-residue chain is ATP phosphoribosyltransferase (220 aa).

The protein belongs to the ATP phosphoribosyltransferase family. Short subfamily. As to quaternary structure, heteromultimer composed of HisG and HisZ subunits.

It is found in the cytoplasm. The enzyme catalyses 1-(5-phospho-beta-D-ribosyl)-ATP + diphosphate = 5-phospho-alpha-D-ribose 1-diphosphate + ATP. The protein operates within amino-acid biosynthesis; L-histidine biosynthesis; L-histidine from 5-phospho-alpha-D-ribose 1-diphosphate: step 1/9. Functionally, catalyzes the condensation of ATP and 5-phosphoribose 1-diphosphate to form N'-(5'-phosphoribosyl)-ATP (PR-ATP). Has a crucial role in the pathway because the rate of histidine biosynthesis seems to be controlled primarily by regulation of HisG enzymatic activity. The sequence is that of ATP phosphoribosyltransferase from Prochlorococcus marinus (strain NATL1A).